The primary structure comprises 300 residues: Porphobilinogen deaminase (300 aa).

C239 bears the S-(dipyrrolylmethanemethyl)cysteine mark.

Belongs to the HMBS family. Monomer. It depends on dipyrromethane as a cofactor.

The catalysed reaction is 4 porphobilinogen + H2O = hydroxymethylbilane + 4 NH4(+). The protein operates within porphyrin-containing compound metabolism; protoporphyrin-IX biosynthesis; coproporphyrinogen-III from 5-aminolevulinate: step 2/4. In terms of biological role, tetrapolymerization of the monopyrrole PBG into the hydroxymethylbilane pre-uroporphyrinogen in several discrete steps. This chain is Porphobilinogen deaminase, found in Francisella tularensis subsp. tularensis (strain FSC 198).